The primary structure comprises 418 residues: Gamma-glutamyl phosphate reductase (418 aa).

It belongs to the gamma-glutamyl phosphate reductase family.

Its subcellular location is the cytoplasm. The catalysed reaction is L-glutamate 5-semialdehyde + phosphate + NADP(+) = L-glutamyl 5-phosphate + NADPH + H(+). It functions in the pathway amino-acid biosynthesis; L-proline biosynthesis; L-glutamate 5-semialdehyde from L-glutamate: step 2/2. Its function is as follows. Catalyzes the NADPH-dependent reduction of L-glutamate 5-phosphate into L-glutamate 5-semialdehyde and phosphate. The product spontaneously undergoes cyclization to form 1-pyrroline-5-carboxylate. This Moorella thermoacetica (strain ATCC 39073 / JCM 9320) protein is Gamma-glutamyl phosphate reductase.